Here is a 135-residue protein sequence, read N- to C-terminus: MNNLFVLVIIIVLSAGSNNGSKLFPKNQLYFRNSFNRNYDILTVHCKSDKDDLGIHTVARSYVYFFKFGDSIFGDTEIVCTLNHGVSATKYKVTFTAYKESRFVIRFGAIKIWEARDDGIYLTDEDHDAVKMYGW.

A signal peptide spans 1–20 (MNNLFVLVIIIVLSAGSNNG).

The protein belongs to the plant self-incompatibility (S1) protein family.

Its subcellular location is the secreted. The protein is S-protein homolog 7 of Arabidopsis thaliana (Mouse-ear cress).